The following is a 118-amino-acid chain: Putative pterin-4-alpha-carbinolamine dehydratase (118 aa).

This sequence belongs to the pterin-4-alpha-carbinolamine dehydratase family.

The enzyme catalyses (4aS,6R)-4a-hydroxy-L-erythro-5,6,7,8-tetrahydrobiopterin = (6R)-L-erythro-6,7-dihydrobiopterin + H2O. The protein is Putative pterin-4-alpha-carbinolamine dehydratase of Xanthomonas campestris pv. campestris (strain 8004).